Reading from the N-terminus, the 665-residue chain is MTFCDENNLDLIKKDLRYLKLLANQYPNISSASTEIVNLEAILNLPKSTEHFLSDIHGEYESFTHVLKNASGVIKRKIDDVFGNSLRDNEKLTLATVIYYPEQKLELIKQSEKDLSDWYKITLYRLIELCRVVSSKYTRSKVRKALPHDFAYIIEELLHEHDGTINKHEYYNGIVSTIIDIDRAPEFITAISKVIQRLVVDRLHIIGDIYDRGPGAEIIMEELMKHHSVDIQWGNHDILWMGAAAGSEACICNVLRISLRYANLNTIEDGYGINLLPLATFAMDVYENDPCNSFIPKTINKELTQNELNLISKMHKAIAIIQFKLQGQIIKNHPEFKMDDQLLLDKINYEKGTIDLDGHIYKLNDTFFPTVDPKDPYKLTENEDDLIKKLTRSFVNSEKLQRHIRFMYSKGSMYLVYNSNLLYHGCVPLNEDGTFKEITIDGVRYSGKSLLDKFDSLAREAFFFKNGSSAKRFALDMMWYLWCGPNSPEFGKLRMTTLERYFIDDKGTHIEYRNPYYKYRSNEKVVTNILKEFGLDPDCSHVINGHIPVKTKAGENPIKANGKLLVIDGGFCRAYQPETGIAGYTLIYNSYGLLLSSHEPFSSIRKAIEEEKDILSSTIILEQVVSRKRVADTDIGKELKKQIAELKMLLIAYRKGLIKEQDSKS.

Belongs to the FBPase class 3 family. Requires Mn(2+) as cofactor.

It catalyses the reaction beta-D-fructose 1,6-bisphosphate + H2O = beta-D-fructose 6-phosphate + phosphate. The protein operates within carbohydrate biosynthesis; gluconeogenesis. This chain is Fructose-1,6-bisphosphatase class 3, found in Clostridium novyi (strain NT).